Reading from the N-terminus, the 56-residue chain is UPF0291 protein Clos_1191 (56 aa).

The protein belongs to the UPF0291 family.

The protein localises to the cytoplasm. This is UPF0291 protein Clos_1191 from Alkaliphilus oremlandii (strain OhILAs) (Clostridium oremlandii (strain OhILAs)).